The chain runs to 104 residues: Iron-sulfur cluster assembly protein CyaY (104 aa).

Belongs to the frataxin family.

In terms of biological role, involved in iron-sulfur (Fe-S) cluster assembly. May act as a regulator of Fe-S biogenesis. This chain is Iron-sulfur cluster assembly protein CyaY, found in Aeromonas salmonicida (strain A449).